Reading from the N-terminus, the 79-residue chain is Conotoxin Vi6.4 (79 aa).

Positions methionine 1–alanine 22 are cleaved as a signal peptide. The propeptide occupies aspartate 23–arginine 47. 3 disulfide bridges follow: cysteine 49–cysteine 62, cysteine 56–cysteine 67, and cysteine 61–cysteine 77. 2 positions are modified to 4-hydroxyproline: proline 60 and proline 63.

Belongs to the conotoxin O1 superfamily. Expressed by the venom duct.

The protein localises to the secreted. Its function is as follows. Ion channel inhibitor that inhibits the increase in intracellular calcium upon depolarization in DRG neurons. In vivo, both intraperitoneal and intracranial injections into mice induce hyperactivity. The chain is Conotoxin Vi6.4 from Conus virgo (Virgin cone).